Here is a 496-residue protein sequence, read N- to C-terminus: Probable cytosol aminopeptidase (496 aa).

Lys266 and Asp271 together coordinate Mn(2+). Residue Lys278 is part of the active site. Asp289, Asp348, and Glu350 together coordinate Mn(2+). The active site involves Arg352.

Belongs to the peptidase M17 family. The cofactor is Mn(2+).

It is found in the cytoplasm. The catalysed reaction is Release of an N-terminal amino acid, Xaa-|-Yaa-, in which Xaa is preferably Leu, but may be other amino acids including Pro although not Arg or Lys, and Yaa may be Pro. Amino acid amides and methyl esters are also readily hydrolyzed, but rates on arylamides are exceedingly low.. It catalyses the reaction Release of an N-terminal amino acid, preferentially leucine, but not glutamic or aspartic acids.. Functionally, presumably involved in the processing and regular turnover of intracellular proteins. Catalyzes the removal of unsubstituted N-terminal amino acids from various peptides. The protein is Probable cytosol aminopeptidase of Pseudomonas syringae pv. syringae (strain B728a).